A 278-amino-acid polypeptide reads, in one-letter code: Large ribosomal subunit protein uL2 (278 aa).

Disordered regions lie at residues 27 to 58 (STPE…GGGH) and 224 to 278 (VVMN…GKKR). Residues 37–58 (LHGKGGRNAHGRITTRHKGGGH) are compositionally biased toward basic residues. The segment covering 253–268 (PEGRTRKPNKPSDKLI) has biased composition (basic and acidic residues). Over residues 269 to 278 (VRRRRTGKKR) the composition is skewed to basic residues.

The protein belongs to the universal ribosomal protein uL2 family. In terms of assembly, part of the 50S ribosomal subunit. Forms a bridge to the 30S subunit in the 70S ribosome.

Functionally, one of the primary rRNA binding proteins. Required for association of the 30S and 50S subunits to form the 70S ribosome, for tRNA binding and peptide bond formation. It has been suggested to have peptidyltransferase activity; this is somewhat controversial. Makes several contacts with the 16S rRNA in the 70S ribosome. The chain is Large ribosomal subunit protein uL2 from Mycobacterium sp. (strain KMS).